An 898-amino-acid polypeptide reads, in one-letter code: Transportin-1 (898 aa).

20 HEAT repeats span residues Gly19–Glu46, Tyr51–Gln89, Phe98–Leu131, Leu137–Asp174, Asn181–Ile211, Phe224–Leu251, His263–Thr290, Pro306–Val397, His405–Ala433, Pro445–Arg472, Leu486–Ala519, Leu527–Val560, Glu568–Gln606, Glu614–Gly665, Ile676–Phe707, Ala715–Gly748, Pro756–Pro791, Gln799–Asn832, Ile841–Val872, and Glu875–Phe895. The region spanning Val41–Asp109 is the Importin N-terminal domain. The disordered stretch occupies residues Phe347 to Asp374. The segment covering Asp360–Asp374 has biased composition (acidic residues).

This sequence belongs to the importin beta family. Importin beta-2 subfamily. As to quaternary structure, identified in a complex that contains TNPO1, RAN and RANBP1. Binds HNRPA1, HNRPA2, HNRNPDL, RPS7, RPL5 and RAN. Interacts with H2A, H2B, H3 and H4 histones. Interacts with isoform 1 and isoform 5 of ADAR/ADAR1 (via DRBM 3 domain). Interacts with SNAI1 (via zinc fingers); the interaction mediates SNAI1 nuclear import. Interacts with SNAI2 (via zinc fingers). Interacts with RPL23A (via BIB domain) and SRP19; this interaction is involved in RPL23A and SRP19 import into the nucleus. Interacts (via HEAT repeats 8-12) with BAP1 (via non-classical PY-NLS); this interaction is direct, is involved in BAP1 nuclear import and disrupts BAP1 homodimerization.

It is found in the cytoplasm. The protein localises to the nucleus. In terms of biological role, functions in nuclear protein import as nuclear transport receptor. Serves as receptor for nuclear localization signals (NLS) in cargo substrates. May mediate docking of the importin/substrate complex to the nuclear pore complex (NPC) through binding to nucleoporin and the complex is subsequently translocated through the pore by an energy requiring, Ran-dependent mechanism. At the nucleoplasmic side of the NPC, Ran binds to the importin, the importin/substrate complex dissociates and importin is re-exported from the nucleus to the cytoplasm where GTP hydrolysis releases Ran. The directionality of nuclear import is thought to be conferred by an asymmetric distribution of the GTP- and GDP-bound forms of Ran between the cytoplasm and nucleus. Involved in nuclear import of M9-containing proteins. In vitro, binds directly to the M9 region of the heterogeneous nuclear ribonucleoproteins (hnRNP), A1 and A2 and mediates their nuclear import. Involved in hnRNP A1/A2 nuclear export. Mediates the nuclear import of ribosomal proteins RPL23A, RPS7 and RPL5. In vitro, mediates nuclear import of SRP19. Mediates the import of histones H2A, H2B, H3 and H4. Mediates nuclear import of ADAR/ADAR1 in a RanGTP-dependent manner. Main mediator of PR-DUB complex component BAP1 nuclear import; acts redundantly with the karyopherins KPNA1 and KPNA2. In Mus musculus (Mouse), this protein is Transportin-1 (Tnpo1).